The chain runs to 140 residues: FAD synthase (140 aa).

ATP is bound by residues 10–11, 15–18, and Asn-93; these read TF and HPGH.

It belongs to the archaeal FAD synthase family. As to quaternary structure, homodimer. The cofactor is a divalent metal cation.

It catalyses the reaction FMN + ATP + H(+) = FAD + diphosphate. Its pathway is cofactor biosynthesis; FAD biosynthesis; FAD from FMN: step 1/1. Catalyzes the transfer of the AMP portion of ATP to flavin mononucleotide (FMN) to produce flavin adenine dinucleotide (FAD) coenzyme. This chain is FAD synthase, found in Methanocella arvoryzae (strain DSM 22066 / NBRC 105507 / MRE50).